We begin with the raw amino-acid sequence, 257 residues long: Type III pantothenate kinase (257 aa).

11 to 18 serves as a coordination point for ATP; that stretch reads DSGNTAIK. Substrate-binding positions include tyrosine 96 and 103-106; that span reads GCDR. Aspartate 105 acts as the Proton acceptor in catalysis. Residue aspartate 125 participates in K(+) binding. Threonine 128 lines the ATP pocket. Threonine 179 provides a ligand contact to substrate.

It belongs to the type III pantothenate kinase family. Homodimer. It depends on NH4(+) as a cofactor. The cofactor is K(+).

The protein resides in the cytoplasm. The enzyme catalyses (R)-pantothenate + ATP = (R)-4'-phosphopantothenate + ADP + H(+). It functions in the pathway cofactor biosynthesis; coenzyme A biosynthesis; CoA from (R)-pantothenate: step 1/5. Functionally, catalyzes the phosphorylation of pantothenate (Pan), the first step in CoA biosynthesis. In Nitrosomonas eutropha (strain DSM 101675 / C91 / Nm57), this protein is Type III pantothenate kinase.